Reading from the N-terminus, the 345-residue chain is Adenine deaminase (345 aa).

Zn(2+)-binding residues include His24, His26, and His204. The active-site Proton donor is the Glu207. Asp285 is a binding site for Zn(2+). Residue Asp286 participates in substrate binding.

The protein belongs to the metallo-dependent hydrolases superfamily. Adenosine and AMP deaminases family. Adenine deaminase type 2 subfamily. Zn(2+) serves as cofactor.

The catalysed reaction is adenine + H2O + H(+) = hypoxanthine + NH4(+). Its function is as follows. Catalyzes the hydrolytic deamination of adenine to hypoxanthine. Plays an important role in the purine salvage pathway and in nitrogen catabolism. This Albidiferax ferrireducens (strain ATCC BAA-621 / DSM 15236 / T118) (Rhodoferax ferrireducens) protein is Adenine deaminase.